A 307-amino-acid chain; its full sequence is Putative oxidoreductase YceM (307 aa).

It belongs to the Gfo/Idh/MocA family.

This is Putative oxidoreductase YceM (yceM) from Escherichia coli (strain K12).